The primary structure comprises 104 residues: Urease subunit beta (104 aa).

The protein belongs to the urease beta subunit family. As to quaternary structure, heterotrimer of UreA (gamma), UreB (beta) and UreC (alpha) subunits. Three heterotrimers associate to form the active enzyme.

Its subcellular location is the cytoplasm. It catalyses the reaction urea + 2 H2O + H(+) = hydrogencarbonate + 2 NH4(+). The protein operates within nitrogen metabolism; urea degradation; CO(2) and NH(3) from urea (urease route): step 1/1. This Rhodococcus jostii (strain RHA1) protein is Urease subunit beta.